The sequence spans 385 residues: uncharacterized protein (385 aa).

9 consecutive transmembrane segments (helical) span residues 12 to 32 (GVAILGILLLNISAFGLPKAA), 50 to 70 (WAFLDLIGQVKFLTLFALLFG), 90 to 110 (LLVLLGFIHGLLFWDGDILLA), 132 to 152 (FNTGVMLYLVGLGVLLLLGLI), 195 to 215 (LALGAQYGWQLAGMMLIGAAL), 233 to 253 (TGFVLVAIGVTINLPAIALQW), 272 to 292 (LSAPFQAIGYASLFYGFWPQL), 312 to 332 (YLLQTLICTTLFYHLGLFMHF), and 335 to 355 (LELLAFVIPVWLANILFSVIW).

This sequence to B.subtilis YxaH and YrkO.

The protein localises to the cell membrane. Functionally, involved in transport. This is an uncharacterized protein from Escherichia coli (strain K12).